A 541-amino-acid chain; its full sequence is Tryptophan N-monooxygenase 1 (541 aa).

A helical membrane pass occupies residues 21–41 (FSTLYLLSTLQAFVAITLVML). Heme is bound at residue Cys477.

This sequence belongs to the cytochrome P450 family. The cofactor is heme. Found in all tissues tested. Highest expression in roots, and low expression in stem.

It is found in the membrane. It carries out the reaction L-tryptophan + 2 reduced [NADPH--hemoprotein reductase] + 2 O2 = (E)-(indol-3-yl)acetaldehyde oxime + 2 oxidized [NADPH--hemoprotein reductase] + CO2 + 3 H2O + 2 H(+). Functionally, converts tryptophan to indole-3-acetaldoxime, a precursor for tryptophan-derived glucosinolates and indole-3-acetic acid (IAA). Involved in the biosynthetic pathway to 4-hydroxyindole-3-carbonyl nitrile (4-OH-ICN), a cyanogenic metabolite required for inducible pathogen defense. The sequence is that of Tryptophan N-monooxygenase 1 (CYP79B2) from Arabidopsis thaliana (Mouse-ear cress).